The following is a 427-amino-acid chain: A-adding tRNA nucleotidyltransferase (427 aa).

49–52 (GTVR) lines the ATP pocket. Aspartate 62 and aspartate 64 together coordinate Mg(2+). ATP-binding positions include 136-137 (RD), asparagine 141, 181-190 (DPTRLLRGVR), arginine 194, and arginine 225.

The protein belongs to the tRNA nucleotidyltransferase/poly(A) polymerase family. Mg(2+) is required as a cofactor.

It carries out the reaction a tRNA with a 3' CC end + ATP = a tRNA with a 3' CCA end + diphosphate. In terms of biological role, tRNA nucleotidyltransferase involved in the synthesis of the tRNA CCA terminus. Adds the terminal adenosine residue to tRNA. The polypeptide is A-adding tRNA nucleotidyltransferase (Halalkalibacterium halodurans (strain ATCC BAA-125 / DSM 18197 / FERM 7344 / JCM 9153 / C-125) (Bacillus halodurans)).